Consider the following 363-residue polypeptide: 3-dehydroquinate synthase (363 aa).

NAD(+) is bound by residues 134-135, lysine 147, and lysine 156; that span reads TT. Glutamate 189, histidine 254, and histidine 271 together coordinate Zn(2+).

The protein belongs to the sugar phosphate cyclases superfamily. Dehydroquinate synthase family. Co(2+) is required as a cofactor. Zn(2+) serves as cofactor. Requires NAD(+) as cofactor.

The protein localises to the cytoplasm. It carries out the reaction 7-phospho-2-dehydro-3-deoxy-D-arabino-heptonate = 3-dehydroquinate + phosphate. Its pathway is metabolic intermediate biosynthesis; chorismate biosynthesis; chorismate from D-erythrose 4-phosphate and phosphoenolpyruvate: step 2/7. In terms of biological role, catalyzes the conversion of 3-deoxy-D-arabino-heptulosonate 7-phosphate (DAHP) to dehydroquinate (DHQ). This chain is 3-dehydroquinate synthase, found in Prochlorococcus marinus (strain AS9601).